A 606-amino-acid chain; its full sequence is Phosphoenolpyruvate carboxykinase [GTP] (606 aa).

Substrate contacts are provided by residues arginine 79 and 218–220; that span reads YGG. Positions 227 and 247 each coordinate Mn(2+). Substrate is bound at residue serine 269. 270-275 contributes to the GTP binding site; it reads ACGKTN. Cysteine 271 is an active-site residue. Aspartate 294 provides a ligand contact to Mn(2+). 384–386 is a binding site for substrate; the sequence is NSR. GTP is bound by residues arginine 386, arginine 417, and 512 to 515; that span reads FGEN.

This sequence belongs to the phosphoenolpyruvate carboxykinase [GTP] family. As to quaternary structure, monomer. It depends on Mn(2+) as a cofactor.

Its subcellular location is the cytoplasm. It carries out the reaction oxaloacetate + GTP = phosphoenolpyruvate + GDP + CO2. It functions in the pathway carbohydrate biosynthesis; gluconeogenesis. Its function is as follows. Catalyzes the conversion of oxaloacetate (OAA) to phosphoenolpyruvate (PEP), the rate-limiting step in the metabolic pathway that produces glucose from lactate and other precursors derived from the citric acid cycle. This Corynebacterium jeikeium (strain K411) protein is Phosphoenolpyruvate carboxykinase [GTP].